Consider the following 163-residue polypeptide: GTP-dependent dephospho-CoA kinase (163 aa).

GTP-binding residues include Asp38, Val39, Asp57, Glu115, and Asp138.

The protein belongs to the GTP-dependent DPCK family.

It catalyses the reaction 3'-dephospho-CoA + GTP = GDP + CoA + H(+). Its pathway is cofactor biosynthesis; coenzyme A biosynthesis. Its function is as follows. Catalyzes the GTP-dependent phosphorylation of the 3'-hydroxyl group of dephosphocoenzyme A to form coenzyme A (CoA). This is GTP-dependent dephospho-CoA kinase from Methanothermobacter thermautotrophicus (strain ATCC 29096 / DSM 1053 / JCM 10044 / NBRC 100330 / Delta H) (Methanobacterium thermoautotrophicum).